We begin with the raw amino-acid sequence, 550 residues long: MASFKLATDLPEWKKLEETYKSVGEKFSVRDAFAKDPKRFEEFSWIYKNYDDSKILFDFSKNLVNKEILDQLVTLAKEAGVEKLRDAMFAGDHINTTEDRAVYHVALRNRALRKMPVDGKDTAQEVDDVLKHMKEFSDSIRDGSWTGYTGKSITDVVNIGIGGSDLGPVMVTEALKAYSKPGLNVHFISNIDGTHTAETLKNLNPETTLFLIASKTFTTAETITNATSAKNWFLATAKDSKHIAKHFAALSTNEKEVVAFGIDAKNMFGFESWVGGRYSVWSAIGLSVAIYIGFENFNDFLKGAEAMDQHFLTTPLENNIPVIGGLLSVWYNNFFGAQTHLVVPFDQYLHRFPAYLQQLSMESNGKSVTRANVFTNYQTGTILFGEPATNAQHSFFQLVHQGTKLIPADFILAAQSHNPIEKNLHQRMLASNFFAQSEALMVGKDEAKVKAEGATGGLVPHKEFSGNRPTTSILAQKITPATLGSLIAYYEHLTFTEGAIWNINSFDQWGVELGKVLAKVIGKELDDKKAVATHDASTNGLINQFKEWEE.

D-glucose 6-phosphate-binding positions include 163 to 164 (GS), 214 to 219 (SKTFTT), Gln358, Glu362, His393, and Lys515. Catalysis depends on Glu362, which acts as the Proton donor. Active-site residues include His393 and Lys515.

The protein belongs to the GPI family. Homodimer.

The protein resides in the cytoplasm. The catalysed reaction is alpha-D-glucose 6-phosphate = beta-D-fructose 6-phosphate. It functions in the pathway carbohydrate degradation; glycolysis; D-glyceraldehyde 3-phosphate and glycerone phosphate from D-glucose: step 2/4. In the cytoplasm, catalyzes the conversion of glucose-6-phosphate to fructose-6-phosphate, the second step in glycolysis, and the reverse reaction during gluconeogenesis. The chain is Glucose-6-phosphate isomerase (PGI1) from Candida albicans (strain SC5314 / ATCC MYA-2876) (Yeast).